A 398-amino-acid chain; its full sequence is Serpin-ZX (398 aa).

The segment at 342–366 is RCL; the sequence is GTEAAARTARVVTLRSLPVEPVKVD.

This sequence belongs to the serpin family. Expressed in roots, coleoptiles, shoots, leaves, embryo and endosperm.

Functionally, inhibits chymotrypsin, cathepsin G and trypsin in vitro. The chain is Serpin-ZX (PAZX) from Hordeum vulgare (Barley).